A 309-amino-acid polypeptide reads, in one-letter code: uncharacterized protein (309 aa).

A helical transmembrane segment spans residues 23–39; the sequence is RFNVAIIGGTGGLGRAI.

It belongs to the NmrA-type oxidoreductase family.

The protein resides in the membrane. This is an uncharacterized protein from Saccharomyces cerevisiae (strain ATCC 204508 / S288c) (Baker's yeast).